Here is a 250-residue protein sequence, read N- to C-terminus: Keratin-associated protein 9-1 (250 aa).

Repeat copies occupy residues C8 to T12, C13 to T17, C18 to T22, C37 to S41, C42 to S46, C51 to T55, C56 to T60, C61 to T65, C66 to T70, C75 to S79, C80 to P84, C85 to T89, C90 to S94, C95 to T99, C105 to I109, C114 to P117, C118 to P121, C133 to T137, C138 to T142, C143 to T147, C153 to S157, C162 to T166, C167 to I171, C176 to S180, C185 to P189, C190 to T194, C214 to T218, C219 to T223, C229 to S233, C234 to P238, C239 to S243, and C244 to S248. The segment at C8–S248 is 32 X 5 AA repeats of C-C-[CGSVRQH]-[SQTNP]-[PTSI].

Belongs to the KRTAP type 9 family. In terms of assembly, interacts with hair keratins.

Its function is as follows. In the hair cortex, hair keratin intermediate filaments are embedded in an interfilamentous matrix, consisting of hair keratin-associated proteins (KRTAP), which are essential for the formation of a rigid and resistant hair shaft through their extensive disulfide bond cross-linking with abundant cysteine residues of hair keratins. The matrix proteins include the high-sulfur and high-glycine-tyrosine keratins. The protein is Keratin-associated protein 9-1 of Homo sapiens (Human).